Here is a 384-residue protein sequence, read N- to C-terminus: Galactokinase (384 aa).

34-37 (EHTD) lines the substrate pocket. 123–129 (SSGLSSS) contacts ATP. Positions 129 and 161 each coordinate Mg(2+). The Proton acceptor role is filled by Asp-173. Residue Tyr-222 participates in substrate binding.

Belongs to the GHMP kinase family. GalK subfamily.

Its subcellular location is the cytoplasm. The enzyme catalyses alpha-D-galactose + ATP = alpha-D-galactose 1-phosphate + ADP + H(+). It participates in carbohydrate metabolism; galactose metabolism. Catalyzes the transfer of the gamma-phosphate of ATP to D-galactose to form alpha-D-galactose-1-phosphate (Gal-1-P). This Haemophilus influenzae (strain PittEE) protein is Galactokinase.